We begin with the raw amino-acid sequence, 101 residues long: Large ribosomal subunit protein bL28 (101 aa).

Belongs to the bacterial ribosomal protein bL28 family.

The chain is Large ribosomal subunit protein bL28 from Methylorubrum populi (strain ATCC BAA-705 / NCIMB 13946 / BJ001) (Methylobacterium populi).